An 871-amino-acid chain; its full sequence is Metabotropic glutamate receptor 6 (871 aa).

A signal peptide spans 1–23 (MGRLRVLLLWLAWWLSQAGIAHG). The Extracellular portion of the chain corresponds to 24-579 (AGSVRLAGGL…VVRLTWSSPW (556 aa)). Cys-51 and Cys-93 are joined by a disulfide. L-glutamate-binding positions include Ser-148, 169 to 171 (AST), and Tyr-219. 7 disulfides stabilise this stretch: Cys-238–Cys-530, Cys-361–Cys-377, Cys-417–Cys-424, Cys-512–Cys-531, Cys-516–Cys-534, Cys-537–Cys-549, and Cys-552–Cys-565. The N-linked (GlcNAc...) asparagine glycan is linked to Asn-290. Residue Asp-301 participates in L-glutamate binding. Residue Lys-394 coordinates L-glutamate. Residues Asn-445 and Asn-473 are each glycosylated (N-linked (GlcNAc...) asparagine). Asn-561 carries an N-linked (GlcNAc...) asparagine glycan. Residues 580–602 (AALPLLLAVLGIMATTTIIATFM) form a helical membrane-spanning segment. Topologically, residues 603 to 616 (RHNDTPIVRASGRE) are cytoplasmic. A helical membrane pass occupies residues 617–637 (LSYVLLTGIFLIYAITFLMVA). At 638–648 (EPCAAVCASRR) the chain is on the extracellular side. Residues 649–667 (LLLGLGTTLSYSALLTKTN) form a helical membrane-spanning segment. Residues 668 to 691 (RIYRIFEQGKRSVTPPPFISPTSQ) are Cytoplasmic-facing. The chain crosses the membrane as a helical span at residues 692–712 (LVITFGLTSLQVVGVIAWLGA). At 713–742 (QPPHSVIDYEEQRTVDPEQARGVLKCDMSD) the chain is on the extracellular side. The chain crosses the membrane as a helical span at residues 743-764 (LSLIGCLGYSLLLMVTCTVYAI). The Cytoplasmic segment spans residues 765–777 (KARGVPETFNEAK). The helical transmembrane segment at 778–800 (PIGFTMYTTCIIWLAFVPIFFGT) threads the bilayer. Residues 801–813 (AQSAEKIYIQTTT) lie on the Extracellular side of the membrane. A helical membrane pass occupies residues 814–839 (LTVSLSLSASVSLGMLYVPKTYVILF). The Cytoplasmic segment spans residues 840–871 (HPEQNVQKRKRSLKKTSTMAAPPKSENSEDAK). Positions 848 to 871 (RKRSLKKTSTMAAPPKSENSEDAK) are disordered.

The protein belongs to the G-protein coupled receptor 3 family. As to quaternary structure, homodimer. Interacts with GPR179. Interacts with photoreceptor synaptic protein LRIT1 (via its N-terminal extracellular domain). Detected in the outer plexiform layer in retina (at protein level).

It localises to the cell membrane. The protein localises to the endoplasmic reticulum membrane. The protein resides in the golgi apparatus membrane. It is found in the cell projection. Its subcellular location is the dendrite. In terms of biological role, G-protein coupled receptor for glutamate. Ligand binding causes a conformation change that triggers signaling via guanine nucleotide-binding proteins (G proteins) and modulates the activity of down-stream effectors, such as adenylate cyclase. Signaling inhibits adenylate cyclase activity. Signaling stimulates TRPM1 channel activity and Ca(2+) uptake. Required for normal vision. In Mus musculus (Mouse), this protein is Metabotropic glutamate receptor 6 (Grm6).